We begin with the raw amino-acid sequence, 364 residues long: Formimidoylglutamase (364 aa).

The Mn(2+) site is built by His133, Asp189, His191, Asp193, Asp286, and Asp288.

Belongs to the arginase family. The cofactor is Mn(2+).

It carries out the reaction N-formimidoyl-L-glutamate + H2O = formamide + L-glutamate. It functions in the pathway amino-acid degradation; L-histidine degradation into L-glutamate; L-glutamate from N-formimidoyl-L-glutamate (hydrolase route): step 1/1. In terms of biological role, catalyzes the conversion of N-formimidoyl-L-glutamate to L-glutamate and formamide. The protein is Formimidoylglutamase of Photobacterium profundum (strain SS9).